Here is a 247-residue protein sequence, read N- to C-terminus: F-box and leucine-rich protein 22 (247 aa).

In terms of domain architecture, F-box spans 6–52 (TMHITQLNRECLLHLFSFLDKDSRKSLARTCSQLHDVFEDPALWSLL). Disordered regions lie at residues 124–154 (SPRR…PDHS) and 173–247 (GLGS…AFPQ). The span at 184 to 200 (ETPPAPGVSWGPPPPGA) shows a compositional bias: pro residues.

As to quaternary structure, directly interacts with SKP1 and CUL1. Enriched in cardiac muscle.

The protein localises to the cytoplasm. Its subcellular location is the myofibril. The protein resides in the sarcomere. It localises to the z line. The protein operates within protein modification; protein ubiquitination. Functionally, substrate-recognition component of the SCF (SKP1-CUL1-F-box protein)-type E3 ubiquitin ligase complex. Promotes ubiquitination of sarcomeric proteins alpha-actinin-2 (ACTN2) and filamin-C (FLNC). This chain is F-box and leucine-rich protein 22 (FBXL22), found in Homo sapiens (Human).